We begin with the raw amino-acid sequence, 517 residues long: Maturase K (517 aa).

The protein belongs to the intron maturase 2 family. MatK subfamily.

It localises to the plastid. The protein localises to the chloroplast. Usually encoded in the trnK tRNA gene intron. Probably assists in splicing its own and other chloroplast group II introns. The polypeptide is Maturase K (Trillium maculatum (Spotted wakerobin)).